Reading from the N-terminus, the 211-residue chain is ATP-dependent Clp protease proteolytic subunit 2 (211 aa).

Ser-106 serves as the catalytic Nucleophile. Residue His-131 is part of the active site.

Belongs to the peptidase S14 family. Fourteen ClpP subunits assemble into 2 heptameric rings which stack back to back to give a disk-like structure with a central cavity, resembling the structure of eukaryotic proteasomes.

It localises to the cytoplasm. The enzyme catalyses Hydrolysis of proteins to small peptides in the presence of ATP and magnesium. alpha-casein is the usual test substrate. In the absence of ATP, only oligopeptides shorter than five residues are hydrolyzed (such as succinyl-Leu-Tyr-|-NHMec, and Leu-Tyr-Leu-|-Tyr-Trp, in which cleavage of the -Tyr-|-Leu- and -Tyr-|-Trp bonds also occurs).. Functionally, cleaves peptides in various proteins in a process that requires ATP hydrolysis. Has a chymotrypsin-like activity. Plays a major role in the degradation of misfolded proteins. The polypeptide is ATP-dependent Clp protease proteolytic subunit 2 (Bradyrhizobium diazoefficiens (strain JCM 10833 / BCRC 13528 / IAM 13628 / NBRC 14792 / USDA 110)).